An 809-amino-acid chain; its full sequence is Phenylalanine--tRNA ligase beta subunit (809 aa).

Positions 39–152 (KDKWPNVYVG…ADAPVGMLAS (114 aa)) constitute a tRNA-binding domain. Residues 404 to 492 (KDRNSVVLSL…RIAGYDTIPC (89 aa)) enclose the B5 domain. Residues Asp-470, Asp-476, Glu-479, and Glu-480 each contribute to the Mg(2+) site. One can recognise an FDX-ACB domain in the interval 717–808 (NRFPSVERDL…LNTETGAVLR (92 aa)).

It belongs to the phenylalanyl-tRNA synthetase beta subunit family. Type 1 subfamily. As to quaternary structure, tetramer of two alpha and two beta subunits. Mg(2+) serves as cofactor.

Its subcellular location is the cytoplasm. The enzyme catalyses tRNA(Phe) + L-phenylalanine + ATP = L-phenylalanyl-tRNA(Phe) + AMP + diphosphate + H(+). This is Phenylalanine--tRNA ligase beta subunit from Dehalococcoides mccartyi (strain ATCC BAA-2266 / KCTC 15142 / 195) (Dehalococcoides ethenogenes (strain 195)).